Reading from the N-terminus, the 1229-residue chain is ABC transporter B family member 3 (1229 aa).

Residues 22–42 (VLLMIVGSIGAIGNGVGFPLM) form a helical membrane-spanning segment. One can recognise an ABC transmembrane type-1 1 domain in the interval 25-313 (MIVGSIGAIG…TTPCLTAFAA (289 aa)). N-linked (GlcNAc...) asparagine glycosylation is present at N56. The next 5 membrane-spanning stretches (helical) occupy residues 73-93 (FVYL…CWMI), 149-169 (FIQL…KGWL), 172-192 (LVML…PIIV), 252-272 (GLGL…AIWF), and 281-301 (GYTG…SMSL). One can recognise an ABC transporter 1 domain in the interval 348–584 (IELRDVCFSY…HEGAYAQLIR (237 aa)). 383-390 (GESGSGKS) is a binding site for ATP. N-linked (GlcNAc...) asparagine glycosylation occurs at N450. The span at 594–606 (RLESSNELRDRSI) shows a compositional bias: basic and acidic residues. Positions 594–614 (RLESSNELRDRSINRGSSRNI) are disordered. N-linked (GlcNAc...) asparagine glycosylation occurs at N645. Helical transmembrane passes span 661–681 (ILIL…IFGI) and 706–726 (MIFV…TYLF). In terms of domain architecture, ABC transmembrane type-1 2 spans 662-949 (LILGTLLGAV…ASSFAPDSSK (288 aa)). A glycan (N-linked (GlcNAc...) asparagine) is linked at N758. 3 helical membrane passes run 797-817 (IIAF…IPLI), 888-908 (GVGF…CFYV), and 923-943 (VFQV…ASSF). The ABC transporter 2 domain occupies 984-1222 (IELCHISFTY…EGGVYASLVQ (239 aa)). Residue 1019–1026 (GESGSGKS) participates in ATP binding. 2 N-linked (GlcNAc...) asparagine glycosylation sites follow: N1073 and N1173.

The protein belongs to the ABC transporter superfamily. ABCB family. Multidrug resistance exporter (TC 3.A.1.201) subfamily.

The protein resides in the membrane. This Arabidopsis thaliana (Mouse-ear cress) protein is ABC transporter B family member 3 (ABCB3).